The sequence spans 322 residues: Ubiquitin-conjugating enzyme E2 U (322 aa).

The 150-residue stretch at 4–153 (RAYLLLQRDF…LKLFNRPLQM (150 aa)) folds into the UBC core domain. The active-site Glycyl thioester intermediate is Cys-89.

It belongs to the ubiquitin-conjugating enzyme family. In terms of processing, autoubiquitinated in vitro in the presence of UBR5.

It catalyses the reaction S-ubiquitinyl-[E1 ubiquitin-activating enzyme]-L-cysteine + [E2 ubiquitin-conjugating enzyme]-L-cysteine = [E1 ubiquitin-activating enzyme]-L-cysteine + S-ubiquitinyl-[E2 ubiquitin-conjugating enzyme]-L-cysteine.. It functions in the pathway protein modification; protein ubiquitination. In terms of biological role, catalyzes the covalent attachment of ubiquitin to other proteins. In Macaca fascicularis (Crab-eating macaque), this protein is Ubiquitin-conjugating enzyme E2 U (UBE2U).